Here is a 112-residue protein sequence, read N- to C-terminus: T cell receptor alpha variable 13-1 (112 aa).

A signal peptide spans 1–20; it reads MTSIRAVFIFLWLQLDLVNG. The region spanning 21–112 is the Ig-like domain; that stretch reads ENVEQHPSTL…DSAVYFCAAS (92 aa). An intrachain disulfide couples Cys42 to Cys109. N-linked (GlcNAc...) asparagine glycosylation is present at Asn86.

As to quaternary structure, alpha-beta TR is a heterodimer composed of an alpha and beta chain; disulfide-linked. The alpha-beta TR is associated with the transmembrane signaling CD3 coreceptor proteins to form the TR-CD3 (TcR or TCR). The assembly of alpha-beta TR heterodimers with CD3 occurs in the endoplasmic reticulum where a single alpha-beta TR heterodimer associates with one CD3D-CD3E heterodimer, one CD3G-CD3E heterodimer and one CD247 homodimer forming a stable octameric structure. CD3D-CD3E and CD3G-CD3E heterodimers preferentially associate with TR alpha and TR beta chains, respectively. The association of the CD247 homodimer is the last step of TcR assembly in the endoplasmic reticulum and is required for transport to the cell surface.

It is found in the cell membrane. Functionally, v region of the variable domain of T cell receptor (TR) alpha chain that participates in the antigen recognition. Alpha-beta T cell receptors are antigen specific receptors which are essential to the immune response and are present on the cell surface of T lymphocytes. Recognize peptide-major histocompatibility (MH) (pMH) complexes that are displayed by antigen presenting cells (APC), a prerequisite for efficient T cell adaptive immunity against pathogens. Binding of alpha-beta TR to pMH complex initiates TR-CD3 clustering on the cell surface and intracellular activation of LCK that phosphorylates the ITAM motifs of CD3G, CD3D, CD3E and CD247 enabling the recruitment of ZAP70. In turn ZAP70 phosphorylates LAT, which recruits numerous signaling molecules to form the LAT signalosome. The LAT signalosome propagates signal branching to three major signaling pathways, the calcium, the mitogen-activated protein kinase (MAPK) kinase and the nuclear factor NF-kappa-B (NF-kB) pathways, leading to the mobilization of transcription factors that are critical for gene expression and essential for T cell growth and differentiation. The T cell repertoire is generated in the thymus, by V-(D)-J rearrangement. This repertoire is then shaped by intrathymic selection events to generate a peripheral T cell pool of self-MH restricted, non-autoaggressive T cells. Post-thymic interaction of alpha-beta TR with the pMH complexes shapes TR structural and functional avidity. The chain is T cell receptor alpha variable 13-1 from Homo sapiens (Human).